The sequence spans 356 residues: Ferrochelatase (356 aa).

Fe cation-binding residues include His214 and Glu295.

The protein belongs to the ferrochelatase family.

Its subcellular location is the cytoplasm. The catalysed reaction is heme b + 2 H(+) = protoporphyrin IX + Fe(2+). The protein operates within porphyrin-containing compound metabolism; protoheme biosynthesis; protoheme from protoporphyrin-IX: step 1/1. Functionally, catalyzes the ferrous insertion into protoporphyrin IX. The sequence is that of Ferrochelatase from Paraburkholderia xenovorans (strain LB400).